The chain runs to 314 residues: Transcriptional activator RhrA (314 aa).

The 101-residue stretch at 210 to 310 (ASIKMRVEQN…GVRPSDLRRL (101 aa)) folds into the HTH araC/xylS-type domain. 2 DNA-binding regions (H-T-H motif) span residues 228–249 (TDVA…SREG) and 277–300 (ISQI…RSRY).

Transcriptional activator of the rhizobactin regulon. In Rhizobium meliloti (strain 1021) (Ensifer meliloti), this protein is Transcriptional activator RhrA (rhrA).